The following is a 286-amino-acid chain: 4-hydroxybenzoate octaprenyltransferase (286 aa).

7 helical membrane passes run 21–40 (GTLL…AGGM), 96–116 (LFVI…GLVV), 142–162 (FLGV…TGEV), 167–187 (WWLF…YAMV), 210–230 (QIIG…GWSA), 235–255 (LYGL…MLIF), and 266–286 (FLNN…DYLF).

It belongs to the UbiA prenyltransferase family. Mg(2+) is required as a cofactor.

It is found in the cell inner membrane. It carries out the reaction all-trans-octaprenyl diphosphate + 4-hydroxybenzoate = 4-hydroxy-3-(all-trans-octaprenyl)benzoate + diphosphate. Its pathway is cofactor biosynthesis; ubiquinone biosynthesis. Functionally, catalyzes the prenylation of para-hydroxybenzoate (PHB) with an all-trans polyprenyl group. Mediates the second step in the final reaction sequence of ubiquinone-8 (UQ-8) biosynthesis, which is the condensation of the polyisoprenoid side chain with PHB, generating the first membrane-bound Q intermediate 3-octaprenyl-4-hydroxybenzoate. This chain is 4-hydroxybenzoate octaprenyltransferase, found in Shewanella sp. (strain ANA-3).